Consider the following 227-residue polypeptide: 7-cyano-7-deazaguanine synthase (227 aa).

16-26 is an ATP binding site; sequence FSGGQDSTTCL. 4 residues coordinate Zn(2+): Cys-194, Cys-202, Cys-205, and Cys-208.

The protein belongs to the QueC family. Requires Zn(2+) as cofactor.

The catalysed reaction is 7-carboxy-7-deazaguanine + NH4(+) + ATP = 7-cyano-7-deazaguanine + ADP + phosphate + H2O + H(+). It functions in the pathway purine metabolism; 7-cyano-7-deazaguanine biosynthesis. Catalyzes the ATP-dependent conversion of 7-carboxy-7-deazaguanine (CDG) to 7-cyano-7-deazaguanine (preQ(0)). This Haemophilus influenzae (strain 86-028NP) protein is 7-cyano-7-deazaguanine synthase.